The following is a 704-amino-acid chain: Acetyl-coenzyme A synthetase 1 (704 aa).

CoA contacts are provided by residues 239–242 (RGGK) and Thr-358. Residues 434 to 436 (GEP), 458 to 463 (DTYWQT), Asp-550, and Arg-565 contribute to the ATP site. Ser-573 contacts CoA. An ATP-binding site is contributed by Arg-576. Arg-641 provides a ligand contact to CoA. Positions 702–704 (VKL) match the Microbody targeting signal motif.

The protein belongs to the ATP-dependent AMP-binding enzyme family.

The protein resides in the microsome. Its subcellular location is the endoplasmic reticulum. The enzyme catalyses acetate + ATP + CoA = acetyl-CoA + AMP + diphosphate. The chain is Acetyl-coenzyme A synthetase 1 (ACS1) from Candida glabrata (strain ATCC 2001 / BCRC 20586 / JCM 3761 / NBRC 0622 / NRRL Y-65 / CBS 138) (Yeast).